A 252-amino-acid polypeptide reads, in one-letter code: Probable aquaporin TIP1-2 (252 aa).

The next 2 membrane-spanning stretches (helical) occupy residues 24–44 and 57–77; these read VAEF…GMAF and GLIA…AVGA. The NPA 1 signature appears at 85–87; the sequence is NPA. 3 helical membrane-spanning segments follow: residues 115-137, 144-164, and 173-193; these read VVAC…SLSA, AVVF…ATAV, and VIAP…GGAF. The NPA 2 signature appears at 199–201; it reads NPA. The chain crosses the membrane as a helical span at residues 220 to 240; sequence WLGPFVGAAIAALIYDIIFIG.

This sequence belongs to the MIP/aquaporin (TC 1.A.8) family. TIP (TC 1.A.8.10) subfamily. As to expression, expressed in leaves.

It localises to the vacuole membrane. Functionally, aquaporins facilitate the transport of water and small neutral solutes across cell membranes. May be involved in transport from the vacuolar compartment to the cytoplasm. The polypeptide is Probable aquaporin TIP1-2 (TIP1-2) (Oryza sativa subsp. japonica (Rice)).